A 395-amino-acid chain; its full sequence is Putative 8-amino-7-oxononanoate synthase (395 aa).

R23 contributes to the substrate binding site. 110–111 (GY) provides a ligand contact to pyridoxal 5'-phosphate. H135 is a binding site for substrate. Pyridoxal 5'-phosphate contacts are provided by residues S182, 207-210 (DEAH), and 239-242 (TFSK). K242 carries the post-translational modification N6-(pyridoxal phosphate)lysine. T356 is a substrate binding site.

The protein belongs to the class-II pyridoxal-phosphate-dependent aminotransferase family. BioF subfamily. Homodimer. Requires pyridoxal 5'-phosphate as cofactor.

It catalyses the reaction 6-carboxyhexanoyl-[ACP] + L-alanine + H(+) = (8S)-8-amino-7-oxononanoate + holo-[ACP] + CO2. The protein operates within cofactor biosynthesis; biotin biosynthesis. In terms of biological role, catalyzes the decarboxylative condensation of pimeloyl-[acyl-carrier protein] and L-alanine to produce 8-amino-7-oxononanoate (AON), [acyl-carrier protein], and carbon dioxide. The polypeptide is Putative 8-amino-7-oxononanoate synthase (bioF) (Bacillus cereus (strain ATCC 10987 / NRS 248)).